Consider the following 513-residue polypeptide: 2-isopropylmalate synthase (513 aa).

Residues 4 to 268 enclose the Pyruvate carboxyltransferase domain; it reads IKIFDTTLRD…ETGIKTELIY (265 aa). Mn(2+)-binding residues include Asp13, His203, His205, and Asn239. The regulatory domain stretch occupies residues 392–513; that stretch reads KLVHFHVHTG…GLLRKNGGAE (122 aa).

The protein belongs to the alpha-IPM synthase/homocitrate synthase family. LeuA type 1 subfamily. In terms of assembly, homodimer. Requires Mn(2+) as cofactor.

Its subcellular location is the cytoplasm. The enzyme catalyses 3-methyl-2-oxobutanoate + acetyl-CoA + H2O = (2S)-2-isopropylmalate + CoA + H(+). It functions in the pathway amino-acid biosynthesis; L-leucine biosynthesis; L-leucine from 3-methyl-2-oxobutanoate: step 1/4. Functionally, catalyzes the condensation of the acetyl group of acetyl-CoA with 3-methyl-2-oxobutanoate (2-ketoisovalerate) to form 3-carboxy-3-hydroxy-4-methylpentanoate (2-isopropylmalate). The protein is 2-isopropylmalate synthase of Thermotoga petrophila (strain ATCC BAA-488 / DSM 13995 / JCM 10881 / RKU-1).